We begin with the raw amino-acid sequence, 655 residues long: p-hydroxybenzoic acid efflux pump subunit AaeB (655 aa).

Helical transmembrane passes span 13 to 33, 38 to 58, 69 to 89, 93 to 113, 121 to 141, 152 to 172, 370 to 390, 407 to 427, 431 to 451, 459 to 479, and 482 to 502; these read FAVK…HFQL, WAVL…GGEP, LRII…IAMI, LLMI…SSLV, WGLA…EPLL, EIVI…PRSI, LFWL…IAVV, FIYG…VIIP, QSML…GIEV, MGAL…TFHF, and FLDS…VILL.

Belongs to the aromatic acid exporter ArAE (TC 2.A.85) family.

It localises to the cell inner membrane. In terms of biological role, forms an efflux pump with AaeA. Could function as a metabolic relief valve, allowing to eliminate certain compounds when they accumulate to high levels in the cell. In Escherichia coli O6:K15:H31 (strain 536 / UPEC), this protein is p-hydroxybenzoic acid efflux pump subunit AaeB.